Reading from the N-terminus, the 292-residue chain is Tetrahydromethanopterin:alpha-L-glutamate ligase (292 aa).

The 184-residue stretch at 103–286 (SFLMEVHKIP…IAQNLIDEAL (184 aa)) folds into the ATP-grasp domain. ATP contacts are provided by residues Lys-138, 176-188 (QEFV…VYRD), and Arg-204. Positions 247, 259, and 261 each coordinate Mg(2+). Asp-247, Glu-259, and Asn-261 together coordinate Mn(2+).

Belongs to the RimK family. MptN subfamily. As to quaternary structure, homodimer. The cofactor is Mg(2+). Requires Mn(2+) as cofactor.

It catalyses the reaction 5,6,7,8-tetrahydromethanopterin + L-glutamate + ATP = 5,6,7,8-tetrahydrosarcinapterin + ADP + phosphate + H(+). It functions in the pathway cofactor biosynthesis; 5,6,7,8-tetrahydrosarcinapterin biosynthesis. In terms of biological role, catalyzes the ATP or GTP-dependent addition of one L-glutamate molecule to tetrahydromethanopterin, producing tetrahydrosarcinapterin. This chain is Tetrahydromethanopterin:alpha-L-glutamate ligase (mptN), found in Methanococcus maripaludis (strain DSM 14266 / JCM 13030 / NBRC 101832 / S2 / LL).